Reading from the N-terminus, the 309-residue chain is Ferrochelatase (309 aa).

Residues histidine 185 and glutamate 262 each coordinate Fe cation.

The protein belongs to the ferrochelatase family.

It localises to the cytoplasm. The catalysed reaction is heme b + 2 H(+) = protoporphyrin IX + Fe(2+). It functions in the pathway porphyrin-containing compound metabolism; protoheme biosynthesis; protoheme from protoporphyrin-IX: step 1/1. Catalyzes the ferrous insertion into protoporphyrin IX. The sequence is that of Ferrochelatase from Campylobacter jejuni subsp. jejuni serotype O:23/36 (strain 81-176).